We begin with the raw amino-acid sequence, 170 residues long: Cilia- and flagella-associated protein 276 (170 aa).

Disordered stretches follow at residues 1-37 and 151-170; these read MPLTRDPFQNPALDKDDSYLGKSRASKKLPYKNPTHL and HTAATNGGYSRKNDGGFFST.

As to quaternary structure, microtubule inner protein component of sperm flagellar doublet microtubules. Expressed in trachea multiciliated cells.

The protein resides in the cytoplasm. The protein localises to the cytoskeleton. It localises to the cilium axoneme. It is found in the flagellum axoneme. Functionally, microtubule inner protein (MIP) part of the dynein-decorated doublet microtubules (DMTs) in cilia axoneme, which is required for motile cilia beating. May play an important role for the maintenance of myelin-axon integrity. May affect intracellular Ca(2+) homeostasis. This Bos taurus (Bovine) protein is Cilia- and flagella-associated protein 276.